The chain runs to 343 residues: MKKIAVLFGGNSPEYSVSLTSAASVIQAIDPLKYEVMTIGIAPTMDWYWYQGNLANVRNDTWLEDHKNCHQLTFSSQGFILGEKRIVPDVLFPVLHGKYGEDGCIQGLLELMNLPYVGCHVAASALCMNKWLLHQLADTMGIASAPTLLLSRYENDPATIDRFIQDHGFPIFIKPNEAGSSKGITKVTDKTALQSALTTAFAYGSTVLIQKAIAGIEIGCGILGNEQLTIGACDAISLVDGFFDFEEKYQLISATITVPAPLPLALESQIKEQAQLLYRNLGLTGLARIDFFVTNQGAIYLNEINTMPGFTGHSRYPAMMAEVGLSYEILVEQLIALAEEDKR.

The ATP-grasp domain maps to 134-336 (HQLADTMGIA…YEILVEQLIA (203 aa)). 164-219 (IQDHGFPIFIKPNEAGSSKGITKVTDKTALQSALTTAFAYGSTVLIQKAIAGIEIG) is an ATP binding site. The Mg(2+) site is built by Asp-290, Glu-303, and Asn-305. Mn(2+)-binding residues include Asp-290, Glu-303, and Asn-305.

The protein belongs to the D-alanine--D-alanine ligase family. Requires Mg(2+) as cofactor. Mn(2+) serves as cofactor.

The protein localises to the cell membrane. The catalysed reaction is D-serine + D-alanine + ATP = D-alanyl-D-serine + ADP + phosphate + H(+). D-alanine--D-alanine ligase of altered specificity, which catalyzes synthesis of D-Ala-D-Ser; produces a peptidoglycan which does not terminate in D-alanine but in D-serine, thus probably reducing affinity for vancomycin. Together with VanT and VanXYC, required for vancomycin resistance in E.gallinarum strain BM4174. The polypeptide is Vancomycin C-type resistance protein VanC1 (Enterococcus gallinarum).